The chain runs to 425 residues: Bifunctional phosphoribosylaminoimidazole carboxylase/phosphoribosylaminoimidazole succinocarboxamide synthetase (425 aa).

Ala-2 bears the N-acetylalanine mark. Residues 2-260 (ATAVVVNIGK…WVADRVELLL (259 aa)) form an SAICAR synthetase domain region. Tyr-22 carries the phosphotyrosine modification. Lys-36 carries the N6-acetyllysine modification. Ser-107 carries the phosphoserine modification. Position 238 is a phosphothreonine (Thr-238). At Lys-247 the chain carries N6-acetyllysine. The tract at residues 261-266 (KSDSQC) is linker. Residues 267 to 425 (RVVVLMGSTS…ADKKVRQCNL (159 aa)) form an AIR carboxylase domain region. Ser-274 carries the phosphoserine modification. Ser-332 is a binding site for CO2.

It in the N-terminal section; belongs to the SAICAR synthetase family. This sequence in the C-terminal section; belongs to the AIR carboxylase family. Class II subfamily. In terms of assembly, homooctamer.

It carries out the reaction 5-amino-1-(5-phospho-D-ribosyl)imidazole-4-carboxylate + L-aspartate + ATP = (2S)-2-[5-amino-1-(5-phospho-beta-D-ribosyl)imidazole-4-carboxamido]succinate + ADP + phosphate + 2 H(+). It catalyses the reaction 5-amino-1-(5-phospho-D-ribosyl)imidazole-4-carboxylate + H(+) = 5-amino-1-(5-phospho-beta-D-ribosyl)imidazole + CO2. Its pathway is purine metabolism; IMP biosynthesis via de novo pathway; 5-amino-1-(5-phospho-D-ribosyl)imidazole-4-carboxamide from 5-amino-1-(5-phospho-D-ribosyl)imidazole-4-carboxylate: step 1/2. The protein operates within purine metabolism; IMP biosynthesis via de novo pathway; 5-amino-1-(5-phospho-D-ribosyl)imidazole-4-carboxylate from 5-amino-1-(5-phospho-D-ribosyl)imidazole (carboxylase route): step 1/1. In terms of biological role, bifunctional phosphoribosylaminoimidazole carboxylase and phosphoribosylaminoimidazole succinocarboxamide synthetase catalyzing two reactions of the de novo purine biosynthetic pathway. The protein is Bifunctional phosphoribosylaminoimidazole carboxylase/phosphoribosylaminoimidazole succinocarboxamide synthetase of Mus musculus (Mouse).